The chain runs to 331 residues: Phenol 2-monooxygenase, oxygenase component DmpL (331 aa).

Belongs to the TmoE/XamoE family. The multicomponent enzyme phenol hydroxylase is formed by DmpL (P1 component), DmpM (P2 component), DmpN (P3 component), DmpO (P4 component) and DmpP (P5 component). The oxygenase component is a dimer composed of three subunits, DmpL, DmpN and DmpO (DmpLNO). DmpL interacts with the auxiliary protein DmpK (P0 component).

It carries out the reaction phenol + NADH + O2 + H(+) = catechol + NAD(+) + H2O. The protein operates within aromatic compound metabolism; phenol degradation. Its activity is regulated as follows. Requires DmpM for efficient turnover. The activity of DmpLNO oxygenase is inhibited by dithiothreitol (DTT) by a mechanism apparently involving H(2)O(2) generation. In terms of biological role, part of a multicomponent enzyme which catalyzes the degradation of phenol and some of its methylated derivatives. DmpL, DmpN and DmpO form the oxygenase component of the complex. Required for growth on phenol and for in vitro phenol hydroxylase activity. This is Phenol 2-monooxygenase, oxygenase component DmpL from Pseudomonas sp. (strain CF600).